The sequence spans 421 residues: 3-isopropylmalate dehydratase large subunit (421 aa).

C302, C362, and C365 together coordinate [4Fe-4S] cluster.

It belongs to the aconitase/IPM isomerase family. LeuC type 2 subfamily. Heterodimer of LeuC and LeuD. The cofactor is [4Fe-4S] cluster.

It catalyses the reaction (2R,3S)-3-isopropylmalate = (2S)-2-isopropylmalate. The protein operates within amino-acid biosynthesis; L-leucine biosynthesis; L-leucine from 3-methyl-2-oxobutanoate: step 2/4. Catalyzes the isomerization between 2-isopropylmalate and 3-isopropylmalate, via the formation of 2-isopropylmaleate. The polypeptide is 3-isopropylmalate dehydratase large subunit (Campylobacter concisus (strain 13826)).